Here is a 199-residue protein sequence, read N- to C-terminus: Recombination protein RecR (199 aa).

A C4-type zinc finger spans residues 57–72; it reads CERCNNLSEAPLCAVC. The region spanning 80–174 is the Toprim domain; the sequence is SILCVVESPA…TISRIARGVP (95 aa).

It belongs to the RecR family.

Its function is as follows. May play a role in DNA repair. It seems to be involved in an RecBC-independent recombinational process of DNA repair. It may act with RecF and RecO. This Acidithiobacillus ferrooxidans (strain ATCC 23270 / DSM 14882 / CIP 104768 / NCIMB 8455) (Ferrobacillus ferrooxidans (strain ATCC 23270)) protein is Recombination protein RecR.